A 382-amino-acid chain; its full sequence is uncharacterized protein (382 aa).

The next 12 helical transmembrane spans lie at 8-28, 45-65, 75-95, 102-122, 131-151, 157-177, 204-224, 231-251, 270-290, 291-311, 325-345, and 349-369; these read VMLL…LNTL, MVSS…GYLI, YLAS…VGFW, FIAG…LMCS, LLAA…LLVS, LLHV…PLLF, LGVN…GLMP, GMAN…GILG, VQVF…AMAP, ALFI…AWAC, ALLL…AMLM, and SDNL…LMLL.

The protein belongs to the major facilitator superfamily. YcaD (TC 2.A.1.26) family.

Its subcellular location is the cell inner membrane. This is an uncharacterized protein from Salmonella dublin (strain CT_02021853).